The primary structure comprises 319 residues: HTH-type transcriptional regulator YidZ (319 aa).

Positions 8–65 (LDLNLLLCLQLLMQERSVTKAAKRMNVTPSAVSKSLAKLRAWFDDPLFVNSPLGLSPT) constitute an HTH lysR-type domain. The segment at residues 25-44 (VTKAAKRMNVTPSAVSKSLA) is a DNA-binding region (H-T-H motif).

Belongs to the LysR transcriptional regulatory family.

Involved in anaerobic NO protection. This is HTH-type transcriptional regulator YidZ from Escherichia coli O139:H28 (strain E24377A / ETEC).